A 194-amino-acid chain; its full sequence is Type II methyltransferase M.MjaVI (194 aa).

Belongs to the N(4)/N(6)-methyltransferase family. N(4) subfamily.

The catalysed reaction is a 2'-deoxycytidine in DNA + S-adenosyl-L-methionine = an N(4)-methyl-2'-deoxycytidine in DNA + S-adenosyl-L-homocysteine + H(+). A beta subtype methylase that recognizes the double-stranded sequence 5'-CCGG-3', methylates C-1 on both strands, and protects the DNA from cleavage by the MjaVI endonuclease. In Methanocaldococcus jannaschii (strain ATCC 43067 / DSM 2661 / JAL-1 / JCM 10045 / NBRC 100440) (Methanococcus jannaschii), this protein is Type II methyltransferase M.MjaVI (mjaVIM).